A 56-amino-acid chain; its full sequence is Lantibiotic subtilin (56 aa).

A propeptide spanning residues 1–24 (MSKFDDFDLDVVKVSKQDSKITPQ) is cleaved from the precursor. At Trp-25 the chain carries N2-succinyltryptophan; partial. Positions 27–31 (SESLC) form a cross-link, lanthionine (Ser-Cys). Ser-29 carries the post-translational modification 2,3-didehydroalanine (Ser). Cross-links (beta-methyllanthionine (Thr-Cys)) lie at residues 32-35 (TPGC), 37-43 (TGALQTC), 47-50 (TLTC), and 49-52 (TCNC). The residue at position 42 (Thr-42) is a (Z)-2,3-didehydrobutyrine. Ser-55 carries the post-translational modification 2,3-didehydroalanine (Ser).

Belongs to the type A lantibiotic family. In terms of processing, maturation of lantibiotics involves the enzymatic conversion of Thr, and Ser into dehydrated AA and the formation of thioether bonds with cysteine. This is followed by membrane translocation and cleavage of the modified precursor. Succinylated subtilin is 10-20 times less active than subtilin. The ratio subtilin/succinylated subtilin is about 1:2 after 24 hours growth. Post-translationally, the 2,3-didehydrobutyrine is determined to be the Z-isomer.

Its function is as follows. Lanthionine-containing peptide antibiotic (lantibiotic) active on Gram-positive bacteria. The bactericidal activity of lantibiotics is based on depolarization of energized bacterial cytoplasmic membranes, initiated by the formation of aqueous transmembrane pores. In Bacillus subtilis, this protein is Lantibiotic subtilin (spaS).